Reading from the N-terminus, the 258-residue chain is Tritrans,polycis-undecaprenyl-diphosphate synthase (geranylgeranyl-diphosphate specific) (258 aa).

The active site involves D37. D37 lines the Mg(2+) pocket. Residues 38–41 (GNRR), H54, and 82–84 (STE) each bind substrate. N85 acts as the Proton acceptor in catalysis. Residues F86, R88, R207, and 213–215 (RIS) each bind substrate. E226 contributes to the Mg(2+) binding site.

It belongs to the UPP synthase family. As to quaternary structure, homodimer. It depends on Mg(2+) as a cofactor.

The enzyme catalyses geranylgeranyl diphosphate + 7 isopentenyl diphosphate = tri-trans,hepta-cis-undecaprenyl diphosphate + 7 diphosphate. In terms of biological role, catalyzes the sequential condensation of isopentenyl diphosphate (IPP) with geranylgeranyl diphosphate (GGPP) to yield (2Z,6Z,10Z,14Z,18Z,22Z,26Z,30E,34E,38E)-undecaprenyl diphosphate (tritrans,heptacis-UPP). It is probably the precursor of glycosyl carrier lipids. This Thermoplasma volcanium (strain ATCC 51530 / DSM 4299 / JCM 9571 / NBRC 15438 / GSS1) protein is Tritrans,polycis-undecaprenyl-diphosphate synthase (geranylgeranyl-diphosphate specific).